We begin with the raw amino-acid sequence, 278 residues long: Large ribosomal subunit protein uL2c (278 aa).

The tract at residues 222-241 (GVVMNPNDHPHGGGEGRSPI) is disordered.

This sequence belongs to the universal ribosomal protein uL2 family. As to quaternary structure, part of the 50S ribosomal subunit.

The protein localises to the plastid. It is found in the chloroplast. The protein is Large ribosomal subunit protein uL2c (rpl2) of Tupiella akineta (Green alga).